Reading from the N-terminus, the 426-residue chain is Glutamyl-tRNA reductase (426 aa).

Substrate-binding positions include 52 to 55 (TCNR), Ser-110, 115 to 117 (EYE), and Gln-121. The active-site Nucleophile is Cys-53. 190-195 (GAGEMG) serves as a coordination point for NADP(+).

It belongs to the glutamyl-tRNA reductase family. Homodimer.

It carries out the reaction (S)-4-amino-5-oxopentanoate + tRNA(Glu) + NADP(+) = L-glutamyl-tRNA(Glu) + NADPH + H(+). It participates in porphyrin-containing compound metabolism; protoporphyrin-IX biosynthesis; 5-aminolevulinate from L-glutamyl-tRNA(Glu): step 1/2. In terms of biological role, catalyzes the NADPH-dependent reduction of glutamyl-tRNA(Glu) to glutamate 1-semialdehyde (GSA). The polypeptide is Glutamyl-tRNA reductase (Saccharolobus islandicus (strain Y.N.15.51 / Yellowstone #2) (Sulfolobus islandicus)).